The chain runs to 441 residues: DNA double-strand break repair protein Mre11 (441 aa).

The Mn(2+) site is built by D9, H11, D50, and N85. H86 acts as the Proton donor in catalysis. Mn(2+) contacts are provided by H150, D181, and H183. The interval 360-441 (ESLLSDDPDA…SRDSSLGDFA (82 aa)) is disordered. 2 stretches are compositionally biased toward acidic residues: residues 379-403 (AEAE…EDTA) and 411-425 (TDTD…DSET).

It belongs to the MRE11/RAD32 family. In terms of assembly, homodimer. Forms a heterotetramer composed of two Mre11 subunits and two Rad50 subunits. Mn(2+) serves as cofactor.

Its activity is regulated as follows. Nuclease activity is regulated by Rad50. Its function is as follows. Part of the Rad50/Mre11 complex, which is involved in the early steps of DNA double-strand break (DSB) repair. Mre11 binds to DSB ends and has both double-stranded 3'-5' exonuclease activity and single-stranded endonuclease activity. In polyploid organisms, the Rad50/Mre11 complex appears to restrain the repair of double-strand breaks by homologous recombination, allowing another pathway to act as the primary mode of repair. This Haloferax volcanii (strain ATCC 29605 / DSM 3757 / JCM 8879 / NBRC 14742 / NCIMB 2012 / VKM B-1768 / DS2) (Halobacterium volcanii) protein is DNA double-strand break repair protein Mre11.